Reading from the N-terminus, the 746-residue chain is Stromal interaction molecule 2 (746 aa).

Residues 1 to 14 (MLVLGLLVAGAADG) form the signal peptide. Residues 15–218 (CELVPRHLRG…RPPHNWMKDF (204 aa)) lie on the Extracellular side of the membrane. Positions 67 to 102 (FSLEALQTIHKQMDDDKDGGIEVEESDEFIREDMKY) constitute an EF-hand domain. D80, D82, D84, and E91 together coordinate Ca(2+). An N-linked (GlcNAc...) asparagine glycan is attached at N135. Positions 136–204 (WTLEDTLQWL…QLKALDVVLF (69 aa)) constitute an SAM domain. A helical transmembrane segment spans residues 219 to 235 (ILTVSIVIGVGGCWFAY). Residues 236–746 (TQNKTSKEHV…IKSLFKKKSK (511 aa)) lie on the Cytoplasmic side of the membrane. A coiled-coil region spans residues 247–394 (KMMKDLESLQ…EKIKKKRSTV (148 aa)). Residues 483–562 (DLDEDTPPIV…SLPSPDPDIL (80 aa)) form a disordered region. A Phosphoserine modification is found at S523. Positions 537–549 (HPSHPRHPHHPQH) are enriched in basic residues. Phosphoserine occurs at positions 609, 621, 640, 650, 661, 665, 680, and 697. Residues 685 to 746 (SSGIPVPKPR…IKSLFKKKSK (62 aa)) form a disordered region. Residues 723–732 (DLCHNGEKSK) show a composition bias toward basic and acidic residues. Over residues 733 to 746 (KPSKIKSLFKKKSK) the composition is skewed to basic residues.

As to quaternary structure, oligomer with STIM1. Interacts with ORAI1. Post-translationally, glycosylated. Phosphorylated predominantly on Ser residues. As to expression, expressed in all tissues and tumor cell lines examined.

It localises to the endoplasmic reticulum membrane. Plays a role in mediating store-operated Ca(2+) entry (SOCE), a Ca(2+) influx following depletion of intracellular Ca(2+) stores. Functions as a highly sensitive Ca(2+) sensor in the endoplasmic reticulum which activates both store-operated and store-independent Ca(2+)-influx. Regulates basal cytosolic and endoplasmic reticulum Ca(2+) concentrations. Upon mild variations of the endoplasmic reticulum Ca(2+) concentration, translocates from the endoplasmic reticulum to the plasma membrane where it probably activates the Ca(2+) release-activated Ca(2+) (CRAC) channels ORAI1, ORAI2 and ORAI3. May inhibit STIM1-mediated Ca(2+) influx. This is Stromal interaction molecule 2 (STIM2) from Homo sapiens (Human).